A 96-amino-acid chain; its full sequence is Small ribosomal subunit protein bS6 (96 aa).

The protein belongs to the bacterial ribosomal protein bS6 family.

Its function is as follows. Binds together with bS18 to 16S ribosomal RNA. In Mycolicibacterium paratuberculosis (strain ATCC BAA-968 / K-10) (Mycobacterium paratuberculosis), this protein is Small ribosomal subunit protein bS6.